The following is a 349-amino-acid chain: Sexual stage-specific protein G37 (349 aa).

Residues 1 to 18 form the signal peptide; sequence MKLYLVTFLFFVIYKNKT. The Extracellular segment spans residues 19-91; that stretch reads FVDCVTKKQD…INQVSNNIMR (73 aa). Residues 92–112 form a helical membrane-spanning segment; sequence VYISLLSLFLFPYFSYIGIFG. Residues 113–117 lie on the Cytoplasmic side of the membrane; the sequence is HSRNK. The chain crosses the membrane as a helical span at residues 118–138; that stretch reads ANLTLSSLLAYFALLVSFFLF. At 139–140 the chain is on the extracellular side; the sequence is NG. The helical transmembrane segment at 141-161 threads the bilayer; that stretch reads ILNIGFVTSLPLVVAVLIFIL. Residues 162–176 are Cytoplasmic-facing; it reads GVSDCEINFLYKYTR. The chain crosses the membrane as a helical span at residues 177 to 197; sequence YIFCFIISKLIYDVVTYISKD. Over 198-218 the chain is Extracellular; that stretch reads GANIFDYGFSGHIYMNLLRGK. A helical membrane pass occupies residues 219-239; the sequence is YYIVLKLIHLIILSLISLIII. Residues 240–262 are Cytoplasmic-facing; that stretch reads KICPKIFSNNHLKSPISITFDKY. Residues 263–283 form a helical membrane-spanning segment; that stretch reads IISFLCSLPIATAISQVFYLL. The Extracellular portion of the chain corresponds to 284 to 305; the sequence is SKTINPIDPSIFFMIPSSINFS. Residues 306–326 form a helical membrane-spanning segment; sequence STGTIFSLSIWILMSYLMTFL. The Cytoplasmic segment spans residues 327–349; sequence RNKVEADFNNILNKIPNNLPDFI.

The protein resides in the cell membrane. Functionally, involved in the development of male gametocytes. The protein is Sexual stage-specific protein G37 of Plasmodium berghei (strain Anka).